Reading from the N-terminus, the 112-residue chain is Small ribosomal subunit protein bS6 (112 aa).

It belongs to the bacterial ribosomal protein bS6 family.

Its function is as follows. Binds together with bS18 to 16S ribosomal RNA. The protein is Small ribosomal subunit protein bS6 of Chlamydia trachomatis serovar L2 (strain ATCC VR-902B / DSM 19102 / 434/Bu).